The primary structure comprises 130 residues: Peptide methionine sulfoxide reductase MsrB (130 aa).

One can recognise a MsrB domain in the interval 1–122 (MKKREDMTEM…NSVSMAFEDS (122 aa)). Zn(2+) contacts are provided by C39, C42, C88, and C91. Catalysis depends on C111, which acts as the Nucleophile.

The protein belongs to the MsrB Met sulfoxide reductase family. It depends on Zn(2+) as a cofactor.

It carries out the reaction L-methionyl-[protein] + [thioredoxin]-disulfide + H2O = L-methionyl-(R)-S-oxide-[protein] + [thioredoxin]-dithiol. The polypeptide is Peptide methionine sulfoxide reductase MsrB (Pasteurella multocida (strain Pm70)).